Here is a 303-residue protein sequence, read N- to C-terminus: Ribosomal RNA small subunit methyltransferase H (303 aa).

S-adenosyl-L-methionine-binding positions include 33-35 (GGH), D52, F79, D97, and Q104.

This sequence belongs to the methyltransferase superfamily. RsmH family.

The protein localises to the cytoplasm. It catalyses the reaction cytidine(1402) in 16S rRNA + S-adenosyl-L-methionine = N(4)-methylcytidine(1402) in 16S rRNA + S-adenosyl-L-homocysteine + H(+). Functionally, specifically methylates the N4 position of cytidine in position 1402 (C1402) of 16S rRNA. In Wolinella succinogenes (strain ATCC 29543 / DSM 1740 / CCUG 13145 / JCM 31913 / LMG 7466 / NCTC 11488 / FDC 602W) (Vibrio succinogenes), this protein is Ribosomal RNA small subunit methyltransferase H.